Reading from the N-terminus, the 426-residue chain is Putative zinc protease AlbF (426 aa).

His66 lines the Zn(2+) pocket. Catalysis depends on Glu69, which acts as the Proton acceptor. Zn(2+)-binding residues include His70 and Glu142.

The protein belongs to the peptidase M16 family. It depends on Zn(2+) as a cofactor.

In terms of biological role, required for production of the bacteriocin subtilosin. Could catalyze some step in the processing of presubtilosin. The sequence is that of Putative zinc protease AlbF (albF) from Bacillus subtilis (strain 168).